Here is a 297-residue protein sequence, read N- to C-terminus: Cell division protein FtsX (297 aa).

The Cytoplasmic portion of the chain corresponds to methionine 1–threonine 21. The helical transmembrane segment at isoleucine 22–valine 42 threads the bilayer. At arginine 43–asparagine 171 the chain is on the extracellular side. A helical membrane pass occupies residues alanine 172 to valine 192. The Cytoplasmic segment spans residues glutamine 193 to proline 219. A helical transmembrane segment spans residues phenylalanine 220–methionine 240. Over valine 241–aspartate 267 the chain is Extracellular. A helical transmembrane segment spans residues isoleucine 268 to tyrosine 288. Topologically, residues leucine 289 to arginine 297 are cytoplasmic.

It belongs to the ABC-4 integral membrane protein family. FtsX subfamily. In terms of assembly, forms a membrane-associated complex with FtsE.

It is found in the cell membrane. Functionally, part of the ABC transporter FtsEX involved in cellular division. This chain is Cell division protein FtsX, found in Mycobacterium tuberculosis (strain ATCC 25177 / H37Ra).